The primary structure comprises 701 residues: Glycine--tRNA ligase beta subunit (701 aa).

This sequence belongs to the class-II aminoacyl-tRNA synthetase family. As to quaternary structure, tetramer of two alpha and two beta subunits.

It is found in the cytoplasm. It catalyses the reaction tRNA(Gly) + glycine + ATP = glycyl-tRNA(Gly) + AMP + diphosphate. The protein is Glycine--tRNA ligase beta subunit of Anaeromyxobacter dehalogenans (strain 2CP-C).